Consider the following 205-residue polypeptide: Coatomer subunit zeta-2 (205 aa).

Positions 1 to 12 (MQRPEAWPRPHP) are enriched in basic and acidic residues. The disordered stretch occupies residues 1 to 33 (MQRPEAWPRPHPGEGASAAQAGGAAPPTRATEQ). Over residues 13-30 (GEGASAAQAGGAAPPTRA) the composition is skewed to low complexity.

It belongs to the adaptor complexes small subunit family. In terms of assembly, oligomeric complex.

It is found in the cytoplasm. The protein resides in the cytosol. It localises to the endoplasmic reticulum-Golgi intermediate compartment membrane. Its subcellular location is the golgi apparatus membrane. The protein localises to the cytoplasmic vesicle. It is found in the COPI-coated vesicle membrane. Functionally, the coatomer is a cytosolic protein complex that binds to dilysine motifs and reversibly associates with Golgi non-clathrin-coated vesicles, which further mediate biosynthetic protein transport from the ER, via the Golgi up to the trans Golgi network. Coatomer complex is required for budding from Golgi membranes, and is essential for the retrograde Golgi-to-ER transport of dilysine-tagged proteins. The zeta subunit may be involved in regulating the coat assembly and, hence, the rate of biosynthetic protein transport due to its association-dissociation properties with the coatomer complex. This chain is Coatomer subunit zeta-2 (Copz2), found in Mus musculus (Mouse).